The primary structure comprises 1097 residues: Transmembrane protein 132D (1097 aa).

Residues 1–30 (MCPSEMGTLWYLWSPVLISLAALFSKVTEG) form the signal peptide. The Extracellular segment spans residues 31–913 (RGILESIQRF…PDQAAKGLSD (883 aa)). A compositionally biased stretch (basic and acidic residues) spans 233 to 245 (DERGDCAKEDSRK). Disordered regions lie at residues 233–263 (DERG…SPPL) and 885–906 (SFPD…DPDQ). Residues 914–934 (LEIGMYALLGVFCLAILVFLI) traverse the membrane as a helical segment. Over 935–1097 (NCVTFALKYR…SCMERLHEHV (163 aa)) the chain is Cytoplasmic. The interval 1021–1042 (MLTDDKEQKSEPPTSPTSKRKR) is disordered.

The protein belongs to the TMEM132 family. As to expression, expressed in mature oligodendrocytes in the brain.

Its subcellular location is the membrane. Its function is as follows. Regulates neuronal morphology via inhibition of the WAVE regulatory complex (WCR), a complex that controls F-actin cytoskeletal dynamics. The sequence is that of Transmembrane protein 132D (Tmem132d) from Rattus norvegicus (Rat).